Reading from the N-terminus, the 396-residue chain is Phosphoglycerate kinase (396 aa).

Residues 21–23 (DFN), arginine 36, 59–62 (HLGK), arginine 119, and arginine 156 each bind substrate. ATP contacts are provided by residues lysine 206, glycine 294, glutamate 325, and 352–355 (GGDS).

The protein belongs to the phosphoglycerate kinase family. As to quaternary structure, monomer.

The protein resides in the cytoplasm. It catalyses the reaction (2R)-3-phosphoglycerate + ATP = (2R)-3-phospho-glyceroyl phosphate + ADP. It participates in carbohydrate degradation; glycolysis; pyruvate from D-glyceraldehyde 3-phosphate: step 2/5. The sequence is that of Phosphoglycerate kinase from Listeria monocytogenes serotype 4b (strain CLIP80459).